Here is a 372-residue protein sequence, read N- to C-terminus: Glutamate 5-kinase (372 aa).

Lysine 14 is an ATP binding site. Residues serine 54, aspartate 141, and asparagine 153 each contribute to the substrate site. An ATP-binding site is contributed by 173–174 (TD). In terms of domain architecture, PUA spans 280–358 (RGHVVIDAGA…GEIESVLGYM (79 aa)).

This sequence belongs to the glutamate 5-kinase family.

It localises to the cytoplasm. The enzyme catalyses L-glutamate + ATP = L-glutamyl 5-phosphate + ADP. It participates in amino-acid biosynthesis; L-proline biosynthesis; L-glutamate 5-semialdehyde from L-glutamate: step 1/2. Functionally, catalyzes the transfer of a phosphate group to glutamate to form L-glutamate 5-phosphate. The protein is Glutamate 5-kinase of Burkholderia lata (strain ATCC 17760 / DSM 23089 / LMG 22485 / NCIMB 9086 / R18194 / 383).